Consider the following 243-residue polypeptide: Carboxy-S-adenosyl-L-methionine synthase (243 aa).

S-adenosyl-L-methionine is bound by residues Y40, G65–S67, D90–N91, D118–I119, N133, and R200.

The protein belongs to the class I-like SAM-binding methyltransferase superfamily. Cx-SAM synthase family. Homodimer.

The catalysed reaction is prephenate + S-adenosyl-L-methionine = carboxy-S-adenosyl-L-methionine + 3-phenylpyruvate + H2O. Functionally, catalyzes the conversion of S-adenosyl-L-methionine (SAM) to carboxy-S-adenosyl-L-methionine (Cx-SAM). The sequence is that of Carboxy-S-adenosyl-L-methionine synthase from Shewanella baltica (strain OS223).